The primary structure comprises 156 residues: Urease accessory protein UreE (156 aa).

Residues 133-156 (RPESGAYGSGRTMGHDHGPFHVHA) form a disordered region. Positions 145–156 (MGHDHGPFHVHA) are enriched in basic and acidic residues.

This sequence belongs to the UreE family.

Its subcellular location is the cytoplasm. Involved in urease metallocenter assembly. Binds nickel. Probably functions as a nickel donor during metallocenter assembly. The chain is Urease accessory protein UreE from Rhodobacter capsulatus (Rhodopseudomonas capsulata).